The sequence spans 316 residues: MSVFTPLERSTLEAFLAPYDLGRLRDFRGIAEGSENSNFFVSLEHGEFVLTLVERGPVQDLPFFIELLDVLHEDGLPVPYALRTRDGEALRRLEGKPALLQPRLAGRHERQPNAHHCQEVGDLLGHLHAATRGRILERPSDRGLPWMLEQGANLAPRLPEQARALLAPALAEIAALDAERPALPRANLHADLFRDNVLFDGPHLAGLIDFYNACSGWMLYDLAITLNDWCSNADGSLDPARARALLAAYANRRPFTALEAEHWPSMLRVACVRFWLSRLIAAEAFAGQDVLIHDPAEFEMRLAQRQNVEIHLPFAL.

This sequence belongs to the pseudomonas-type ThrB family.

It catalyses the reaction L-homoserine + ATP = O-phospho-L-homoserine + ADP + H(+). It functions in the pathway amino-acid biosynthesis; L-threonine biosynthesis; L-threonine from L-aspartate: step 4/5. The sequence is that of Homoserine kinase from Pseudomonas aeruginosa (strain UCBPP-PA14).